Here is a 225-residue protein sequence, read N- to C-terminus: Uracil-DNA glycosylase (225 aa).

Aspartate 65 (proton acceptor) is an active-site residue.

Belongs to the uracil-DNA glycosylase (UDG) superfamily. UNG family.

Its subcellular location is the cytoplasm. It catalyses the reaction Hydrolyzes single-stranded DNA or mismatched double-stranded DNA and polynucleotides, releasing free uracil.. Its function is as follows. Excises uracil residues from the DNA which can arise as a result of misincorporation of dUMP residues by DNA polymerase or due to deamination of cytosine. The chain is Uracil-DNA glycosylase from Bacillus cereus (strain ZK / E33L).